Consider the following 300-residue polypeptide: Non-secreted LysM effector LysM16 (300 aa).

The region spanning 176 to 222 (EWHTVFSGDTCQLIEAEYGITLEKFIALNTYVNSTCGNIWPDYAYCV) is the LysM domain.

The protein belongs to the secreted LysM effector family.

In terms of biological role, non-secreted LysM effector that might be involved in manipulation of host defenses for successful infection. The sequence is that of Non-secreted LysM effector LysM16 from Penicillium expansum (Blue mold rot fungus).